A 723-amino-acid chain; its full sequence is uncharacterized protein (723 aa).

Residues 1–12 (MTGKKKNRHQKK) are compositionally biased toward basic residues. Disordered stretches follow at residues 1 to 166 (MTGK…EKEI), 181 to 212 (IKRKKEKKVKPQPVQPTPPVPAPAPQQSSGWG), 268 to 289 (LPLSDTEDSDNDNDNGGDDNDN), and 391 to 455 (KNKS…NTST). Residues 30–42 (DETTTTTTTTTTT) show a composition bias toward low complexity. Basic and acidic residues-rich tracts occupy residues 45-129 (EETK…KTDD) and 149-166 (TDIKDEKKEEKKKVEKEI). Positions 53 to 173 (IVENKDEDKK…KEIEDPNKKY (121 aa)) form a coiled coil. Residues 181–190 (IKRKKEKKVK) are compositionally biased toward basic residues. Residues 193 to 204 (PVQPTPPVPAPA) are compositionally biased toward pro residues. Over residues 272–288 (DTEDSDNDNDNGGDDND) the composition is skewed to acidic residues. Low complexity predominate over residues 397–455 (DENNNNNNNNNQQQPQQQQTTSPTLSTSPTSPKSPTTTTTNTTTTTTTNTNNNNNNTST).

This is an uncharacterized protein from Dictyostelium discoideum (Social amoeba).